We begin with the raw amino-acid sequence, 305 residues long: Phosphatidylinositol:ceramide inositolphosphotransferase 2 (305 aa).

6 helical membrane-spanning segments follow: residues 34–54 (LLAG…VHYI), 81–101 (ETVF…PFIL), 105–125 (KIYT…CQFL), 168–188 (VMYG…LVFV), 198–218 (RFIK…IIAS), and 221–241 (HYSV…FCLD). The active site involves His180. Catalysis depends on residues His221 and Asp225.

It belongs to the sphingomyelin synthase family. In terms of tissue distribution, expressed in leaves, roots, stems, flowers and siliques.

It localises to the golgi apparatus. The protein resides in the trans-Golgi network membrane. The enzyme catalyses an N-(2R-hydroxy-very-long-chain fatty acyl)-(R)-4-hydroxysphingoid base + a 1,2-diacyl-sn-glycero-3-phospho-(1D-myo-inositol) = a 1D-myo-inositol-1-phospho-N-[(R)-2-hydroxy-very-long-chain fatty acyl]-(R)-4-hydroxysphingoid base + a 1,2-diacyl-sn-glycerol. Its pathway is sphingolipid metabolism. In terms of biological role, catalyzes the transfer of the phosphorylinositol group from phosphatidylinositol (PI) to phytoceramide, an essential step in sphingolipid biosynthesis. May play an important role in modulating plant programmed cell death (PCD) associated with defense (e.g. toward Golovinomyces cichoracearum) by promoting sphingolipid metabolism and thus regulating ceramide accumulation. This chain is Phosphatidylinositol:ceramide inositolphosphotransferase 2, found in Arabidopsis thaliana (Mouse-ear cress).